We begin with the raw amino-acid sequence, 449 residues long: Protein CapK (449 aa).

The protein operates within capsule biogenesis; capsule polysaccharide biosynthesis. Functionally, required for the biosynthesis of type 1 capsular polysaccharide. This chain is Protein CapK (capK), found in Staphylococcus aureus.